We begin with the raw amino-acid sequence, 242 residues long: Uridylate kinase (242 aa).

An ATP-binding site is contributed by 11–14 (KLSG). The interval 19 to 24 (GEKGVG) is involved in allosteric activation by GTP. G53 lines the UMP pocket. Residues G54 and R58 each contribute to the ATP site. UMP-binding positions include D73 and 134 to 141 (IGSPYFST). N162, Y168, and D171 together coordinate ATP.

This sequence belongs to the UMP kinase family. In terms of assembly, homohexamer.

The protein localises to the cytoplasm. The catalysed reaction is UMP + ATP = UDP + ADP. It functions in the pathway pyrimidine metabolism; CTP biosynthesis via de novo pathway; UDP from UMP (UMPK route): step 1/1. Allosterically activated by GTP. Inhibited by UTP. Catalyzes the reversible phosphorylation of UMP to UDP. The protein is Uridylate kinase of Streptococcus pyogenes serotype M1.